We begin with the raw amino-acid sequence, 347 residues long: S-adenosylmethionine:tRNA ribosyltransferase-isomerase (347 aa).

Belongs to the QueA family. Monomer.

The protein resides in the cytoplasm. It catalyses the reaction 7-aminomethyl-7-carbaguanosine(34) in tRNA + S-adenosyl-L-methionine = epoxyqueuosine(34) in tRNA + adenine + L-methionine + 2 H(+). It functions in the pathway tRNA modification; tRNA-queuosine biosynthesis. Its function is as follows. Transfers and isomerizes the ribose moiety from AdoMet to the 7-aminomethyl group of 7-deazaguanine (preQ1-tRNA) to give epoxyqueuosine (oQ-tRNA). The sequence is that of S-adenosylmethionine:tRNA ribosyltransferase-isomerase from Halalkalibacterium halodurans (strain ATCC BAA-125 / DSM 18197 / FERM 7344 / JCM 9153 / C-125) (Bacillus halodurans).